A 572-amino-acid chain; its full sequence is Urease subunit alpha (572 aa).

The 439-residue stretch at 134-572 folds into the Urease domain; it reads GGIDAHVHMI…VSLGQLYFFS (439 aa). Residues H139, H141, and K222 each contribute to the Ni(2+) site. At K222 the chain carries N6-carboxylysine. H224 provides a ligand contact to substrate. The Ni(2+) site is built by H251 and H277. Residue H325 is the Proton donor of the active site. Position 365 (D365) interacts with Ni(2+).

The protein belongs to the metallo-dependent hydrolases superfamily. Urease alpha subunit family. In terms of assembly, heterotrimer of UreA (gamma), UreB (beta) and UreC (alpha) subunits. Three heterotrimers associate to form the active enzyme. Ni cation serves as cofactor. In terms of processing, carboxylation allows a single lysine to coordinate two nickel ions.

Its subcellular location is the cytoplasm. It carries out the reaction urea + 2 H2O + H(+) = hydrogencarbonate + 2 NH4(+). It participates in nitrogen metabolism; urea degradation; CO(2) and NH(3) from urea (urease route): step 1/1. The sequence is that of Urease subunit alpha from Laribacter hongkongensis (strain HLHK9).